Consider the following 223-residue polypeptide: MLTLFKKGKPKGGSVDDRNSSYRESDPMLVWGTAPPAYLDVYHDERDKNELQFNTKSYLIQANLEVISSKPIERTTEMLKVLDVMVDEYDGSYLSKALIITSYLTIGTHLRRMMSSVKNNHKYNNGFTEVIEFTGTAEIHPRDQEIKYNKYLMTSHMGEPVSISYQFSGKKSKRRGKNILDAYNLELGNGSKPPDLKDLLESYEINLCYNLKGEHGFTNLVKS.

The span at 1 to 10 (MLTLFKKGKP) shows a compositional bias: basic residues. Residues 1–23 (MLTLFKKGKPKGGSVDDRNSSYR) are disordered. The segment covering 14-23 (SVDDRNSSYR) has biased composition (basic and acidic residues).

Homomultimer. Interacts with nucleoprotein and with the cytoplasmic domain of glycoprotein.

It is found in the virion membrane. The protein localises to the host endomembrane system. Its function is as follows. Plays a major role in assembly and budding of virion. Completely covers the ribonucleoprotein coil and keep it in condensed bullet-shaped form. Inhibits viral transcription and stimulates replication. The polypeptide is Matrix protein (M) (Bos taurus (Bovine)).